Here is a 238-residue protein sequence, read N- to C-terminus: Transcription factor PCL1 (238 aa).

The span at Arg71 to Gly90 shows a compositional bias: low complexity. The tract at residues Arg71–Ala119 is disordered. Residues Ser100 to Gly109 show a composition bias toward gly residues. The myb-like GARP DNA-binding region spans Ser115–Lys174.

The protein resides in the nucleus. In terms of biological role, transcription factor that is essential for the generation of the circadian clock oscillation. Binds to specific sites on CCA1 promoter leading to CCA1 activation. This Oryza sativa subsp. japonica (Rice) protein is Transcription factor PCL1 (PCL1).